The primary structure comprises 498 residues: Glutamyl-tRNA(Gln) amidotransferase subunit A (498 aa).

Active-site charge relay system residues include Lys-85 and Ser-160. Ser-184 (acyl-ester intermediate) is an active-site residue.

It belongs to the amidase family. GatA subfamily. As to quaternary structure, heterotrimer of A, B and C subunits.

The enzyme catalyses L-glutamyl-tRNA(Gln) + L-glutamine + ATP + H2O = L-glutaminyl-tRNA(Gln) + L-glutamate + ADP + phosphate + H(+). Allows the formation of correctly charged Gln-tRNA(Gln) through the transamidation of misacylated Glu-tRNA(Gln) in organisms which lack glutaminyl-tRNA synthetase. The reaction takes place in the presence of glutamine and ATP through an activated gamma-phospho-Glu-tRNA(Gln). This Mycolicibacterium vanbaalenii (strain DSM 7251 / JCM 13017 / BCRC 16820 / KCTC 9966 / NRRL B-24157 / PYR-1) (Mycobacterium vanbaalenii) protein is Glutamyl-tRNA(Gln) amidotransferase subunit A.